A 285-amino-acid chain; its full sequence is Nucleotide-binding protein Gmet_1286 (285 aa).

8-15 lines the ATP pocket; sequence GLSGSGKS. 59–62 provides a ligand contact to GTP; it reads DIRG.

This sequence belongs to the RapZ-like family.

Functionally, displays ATPase and GTPase activities. The chain is Nucleotide-binding protein Gmet_1286 from Geobacter metallireducens (strain ATCC 53774 / DSM 7210 / GS-15).